The primary structure comprises 76 residues: DNA gyrase inhibitor YacG (76 aa).

Positions 20, 23, 39, and 43 each coordinate Zn(2+). A disordered region spans residues 54 to 76; it reads EEKSIPGAPDLSDSDGWSDDMGY. Over residues 65 to 76 the composition is skewed to acidic residues; it reads SDSDGWSDDMGY.

Belongs to the DNA gyrase inhibitor YacG family. As to quaternary structure, interacts with GyrB. The cofactor is Zn(2+).

Functionally, inhibits all the catalytic activities of DNA gyrase by preventing its interaction with DNA. Acts by binding directly to the C-terminal domain of GyrB, which probably disrupts DNA binding by the gyrase. In Photobacterium profundum (strain SS9), this protein is DNA gyrase inhibitor YacG.